The sequence spans 292 residues: Short chain dehydrogenase mpl6 (292 aa).

8 residues coordinate NADP(+): V37, D95, N122, R156, Y188, K192, V221, and T223. The Proton donor role is filled by Y188. Residue K192 is the Lowers pKa of active site Tyr of the active site.

Belongs to the short-chain dehydrogenases/reductases (SDR) family.

The protein operates within mycotoxin biosynthesis. Its function is as follows. Short chain dehydrogenase; part of the gene cluster that mediates the biosynthesis of the mycotoxin citrinin, a hepato-nephrotoxic compound to humans due to inhibition of respiration complex III. The pathway begins with the synthesis of a keto-aldehyde intermediate by the citrinin PKS (pksCT) from successive condensations of 4 malonyl-CoA units, presumably with a simple acetyl-CoA starter unit. Release of the keto-aldehyde intermediate is consistent with the presence of the C-terminal reductive release domain. Mp11 collaborates with pksCT by catalyzing the hydrolysis of ACP-bound acyl intermediates to free the ACP from stalled intermediates. Mpl2 then catalyzes the oxidation of the C-12 methyl of the ketone intermediate to an alcohol intermediate which is further oxidized by the oxidoreductase mpl7 to produce a bisaldehyde intermediate. The fourth catalytic step is catalyzed by the mpl4 aldehyde dehydrogenase. The final transformation is the reduction of C-3 by mpl6 to provide the chemically stable citrinin nucleus. The sequence is that of Short chain dehydrogenase mpl6 from Monascus purpureus (Red mold).